Reading from the N-terminus, the 62-residue chain is MLLIFQLALFAFIVVSFLLVVGVPVVLATPEGWAENKSTVFSGIGIWFLLVFLVGILNSFVV.

2 helical membrane passes run 8 to 28 (ALFAFIVVSFLLVVGVPVVLA) and 41 to 61 (FSGIGIWFLLVFLVGILNSFV).

It belongs to the PsbZ family. PSII is composed of 1 copy each of membrane proteins PsbA, PsbB, PsbC, PsbD, PsbE, PsbF, PsbH, PsbI, PsbJ, PsbK, PsbL, PsbM, PsbT, PsbY, PsbZ, Psb30/Ycf12, at least 3 peripheral proteins of the oxygen-evolving complex and a large number of cofactors. It forms dimeric complexes.

The protein localises to the plastid. It localises to the chloroplast thylakoid membrane. Its function is as follows. May control the interaction of photosystem II (PSII) cores with the light-harvesting antenna, regulates electron flow through the 2 photosystem reaction centers. PSII is a light-driven water plastoquinone oxidoreductase, using light energy to abstract electrons from H(2)O, generating a proton gradient subsequently used for ATP formation. This is Photosystem II reaction center protein Z from Chlorella vulgaris (Green alga).